The primary structure comprises 318 residues: Bis(5'-nucleosyl)-tetraphosphatase, symmetrical (318 aa).

The disordered stretch occupies residues 269-318 (PGREVTGPAPVARAPRRPRERQGRQRSRGNRGNAGNAAAGPKPSVDTPQD). The segment covering 282–297 (APRRPRERQGRQRSRG) has biased composition (basic residues). The segment covering 298–311 (NRGNAGNAAAGPKP) has biased composition (low complexity).

This sequence belongs to the Ap4A hydrolase family.

The enzyme catalyses P(1),P(4)-bis(5'-adenosyl) tetraphosphate + H2O = 2 ADP + 2 H(+). Its function is as follows. Hydrolyzes diadenosine 5',5'''-P1,P4-tetraphosphate to yield ADP. This chain is Bis(5'-nucleosyl)-tetraphosphatase, symmetrical, found in Xanthomonas euvesicatoria pv. vesicatoria (strain 85-10) (Xanthomonas campestris pv. vesicatoria).